Here is a 273-residue protein sequence, read N- to C-terminus: 2,3,4,5-tetrahydropyridine-2,6-dicarboxylate N-succinyltransferase (273 aa).

Substrate is bound by residues R104 and D141.

Belongs to the transferase hexapeptide repeat family. As to quaternary structure, homotrimer.

Its subcellular location is the cytoplasm. It carries out the reaction (S)-2,3,4,5-tetrahydrodipicolinate + succinyl-CoA + H2O = (S)-2-succinylamino-6-oxoheptanedioate + CoA. It functions in the pathway amino-acid biosynthesis; L-lysine biosynthesis via DAP pathway; LL-2,6-diaminopimelate from (S)-tetrahydrodipicolinate (succinylase route): step 1/3. The sequence is that of 2,3,4,5-tetrahydropyridine-2,6-dicarboxylate N-succinyltransferase from Psychrobacter arcticus (strain DSM 17307 / VKM B-2377 / 273-4).